The following is a 345-amino-acid chain: S-adenosylmethionine:tRNA ribosyltransferase-isomerase (345 aa).

This sequence belongs to the QueA family. In terms of assembly, monomer.

The protein resides in the cytoplasm. It carries out the reaction 7-aminomethyl-7-carbaguanosine(34) in tRNA + S-adenosyl-L-methionine = epoxyqueuosine(34) in tRNA + adenine + L-methionine + 2 H(+). Its pathway is tRNA modification; tRNA-queuosine biosynthesis. Transfers and isomerizes the ribose moiety from AdoMet to the 7-aminomethyl group of 7-deazaguanine (preQ1-tRNA) to give epoxyqueuosine (oQ-tRNA). This chain is S-adenosylmethionine:tRNA ribosyltransferase-isomerase, found in Shewanella halifaxensis (strain HAW-EB4).